The chain runs to 269 residues: Tryptophan synthase alpha chain (269 aa).

Active-site proton acceptor residues include Glu49 and Asp60.

This sequence belongs to the TrpA family. In terms of assembly, tetramer of two alpha and two beta chains.

The enzyme catalyses (1S,2R)-1-C-(indol-3-yl)glycerol 3-phosphate + L-serine = D-glyceraldehyde 3-phosphate + L-tryptophan + H2O. The protein operates within amino-acid biosynthesis; L-tryptophan biosynthesis; L-tryptophan from chorismate: step 5/5. Functionally, the alpha subunit is responsible for the aldol cleavage of indoleglycerol phosphate to indole and glyceraldehyde 3-phosphate. The sequence is that of Tryptophan synthase alpha chain from Pseudomonas putida (strain ATCC 700007 / DSM 6899 / JCM 31910 / BCRC 17059 / LMG 24140 / F1).